The chain runs to 242 residues: 2-C-methyl-D-erythritol 4-phosphate cytidylyltransferase (242 aa).

The protein belongs to the IspD/TarI cytidylyltransferase family. IspD subfamily.

The catalysed reaction is 2-C-methyl-D-erythritol 4-phosphate + CTP + H(+) = 4-CDP-2-C-methyl-D-erythritol + diphosphate. The protein operates within isoprenoid biosynthesis; isopentenyl diphosphate biosynthesis via DXP pathway; isopentenyl diphosphate from 1-deoxy-D-xylulose 5-phosphate: step 2/6. Its function is as follows. Catalyzes the formation of 4-diphosphocytidyl-2-C-methyl-D-erythritol from CTP and 2-C-methyl-D-erythritol 4-phosphate (MEP). The protein is 2-C-methyl-D-erythritol 4-phosphate cytidylyltransferase of Halorhodospira halophila (strain DSM 244 / SL1) (Ectothiorhodospira halophila (strain DSM 244 / SL1)).